Reading from the N-terminus, the 149-residue chain is Large ribosomal subunit protein bL9 (149 aa).

It belongs to the bacterial ribosomal protein bL9 family.

Functionally, binds to the 23S rRNA. The sequence is that of Large ribosomal subunit protein bL9 from Xanthomonas oryzae pv. oryzae (strain MAFF 311018).